We begin with the raw amino-acid sequence, 295 residues long: Pyridoxal 5'-phosphate synthase subunit PdxS (295 aa).

Asp25 is a binding site for D-ribose 5-phosphate. Lys82 functions as the Schiff-base intermediate with D-ribose 5-phosphate in the catalytic mechanism. D-ribose 5-phosphate is bound at residue Gly154. Arg166 is a binding site for D-glyceraldehyde 3-phosphate. D-ribose 5-phosphate is bound by residues Gly215 and 236 to 237; that span reads GS.

It belongs to the PdxS/SNZ family. In the presence of PdxT, forms a dodecamer of heterodimers.

The catalysed reaction is aldehydo-D-ribose 5-phosphate + D-glyceraldehyde 3-phosphate + L-glutamine = pyridoxal 5'-phosphate + L-glutamate + phosphate + 3 H2O + H(+). It participates in cofactor biosynthesis; pyridoxal 5'-phosphate biosynthesis. Catalyzes the formation of pyridoxal 5'-phosphate from ribose 5-phosphate (RBP), glyceraldehyde 3-phosphate (G3P) and ammonia. The ammonia is provided by the PdxT subunit. Can also use ribulose 5-phosphate and dihydroxyacetone phosphate as substrates, resulting from enzyme-catalyzed isomerization of RBP and G3P, respectively. In Bacillus cereus (strain Q1), this protein is Pyridoxal 5'-phosphate synthase subunit PdxS.